Reading from the N-terminus, the 348-residue chain is Dihydroorotase (348 aa).

Positions 14 and 16 each coordinate Zn(2+). Residues 16–18 and Asn42 each bind substrate; that span reads HLR. Positions 100, 137, and 175 each coordinate Zn(2+). Lys100 carries the N6-carboxylysine modification. His137 provides a ligand contact to substrate. Leu220 lines the substrate pocket. Asp248 lines the Zn(2+) pocket. Asp248 is a catalytic residue. Substrate-binding residues include His252 and Ala264.

This sequence belongs to the metallo-dependent hydrolases superfamily. DHOase family. Class II DHOase subfamily. Homodimer. Zn(2+) is required as a cofactor.

The catalysed reaction is (S)-dihydroorotate + H2O = N-carbamoyl-L-aspartate + H(+). The protein operates within pyrimidine metabolism; UMP biosynthesis via de novo pathway; (S)-dihydroorotate from bicarbonate: step 3/3. Its function is as follows. Catalyzes the reversible cyclization of carbamoyl aspartate to dihydroorotate. The chain is Dihydroorotase from Pseudomonas fluorescens (strain ATCC BAA-477 / NRRL B-23932 / Pf-5).